A 415-amino-acid polypeptide reads, in one-letter code: Serine hydroxymethyltransferase (415 aa).

(6S)-5,6,7,8-tetrahydrofolate is bound by residues Leu122 and Gly126–Leu128. N6-(pyridoxal phosphate)lysine is present on Lys230.

It belongs to the SHMT family. In terms of assembly, homodimer. Pyridoxal 5'-phosphate is required as a cofactor.

It localises to the cytoplasm. It carries out the reaction (6R)-5,10-methylene-5,6,7,8-tetrahydrofolate + glycine + H2O = (6S)-5,6,7,8-tetrahydrofolate + L-serine. It participates in one-carbon metabolism; tetrahydrofolate interconversion. Its pathway is amino-acid biosynthesis; glycine biosynthesis; glycine from L-serine: step 1/1. Catalyzes the reversible interconversion of serine and glycine with tetrahydrofolate (THF) serving as the one-carbon carrier. This reaction serves as the major source of one-carbon groups required for the biosynthesis of purines, thymidylate, methionine, and other important biomolecules. Also exhibits THF-independent aldolase activity toward beta-hydroxyamino acids, producing glycine and aldehydes, via a retro-aldol mechanism. The chain is Serine hydroxymethyltransferase from Cupriavidus necator (strain ATCC 17699 / DSM 428 / KCTC 22496 / NCIMB 10442 / H16 / Stanier 337) (Ralstonia eutropha).